Here is a 359-residue protein sequence, read N- to C-terminus: Phosphoserine aminotransferase (359 aa).

Arginine 41 provides a ligand contact to L-glutamate. Pyridoxal 5'-phosphate is bound by residues tryptophan 101, threonine 151, aspartate 170, and glutamine 193. Residue lysine 194 is modified to N6-(pyridoxal phosphate)lysine. A pyridoxal 5'-phosphate-binding site is contributed by 235–236; it reads NT.

It belongs to the class-V pyridoxal-phosphate-dependent aminotransferase family. SerC subfamily. In terms of assembly, homodimer. Pyridoxal 5'-phosphate is required as a cofactor.

Its subcellular location is the cytoplasm. It catalyses the reaction O-phospho-L-serine + 2-oxoglutarate = 3-phosphooxypyruvate + L-glutamate. The enzyme catalyses 4-(phosphooxy)-L-threonine + 2-oxoglutarate = (R)-3-hydroxy-2-oxo-4-phosphooxybutanoate + L-glutamate. It functions in the pathway amino-acid biosynthesis; L-serine biosynthesis; L-serine from 3-phospho-D-glycerate: step 2/3. Its pathway is cofactor biosynthesis; pyridoxine 5'-phosphate biosynthesis; pyridoxine 5'-phosphate from D-erythrose 4-phosphate: step 3/5. In terms of biological role, catalyzes the reversible conversion of 3-phosphohydroxypyruvate to phosphoserine and of 3-hydroxy-2-oxo-4-phosphonooxybutanoate to phosphohydroxythreonine. The polypeptide is Phosphoserine aminotransferase (Laribacter hongkongensis (strain HLHK9)).